Here is a 199-residue protein sequence, read N- to C-terminus: MTDLYAEALATFAALYAEAQNSAEPEASAMTVATANVDGRPSARTVLLKAFDARGFVFYTHLDSAKGRDLQTHPQAALLFLWRSLREAGIQVRIEGGVQLVSADESDAYFASRPRMSQIGAWASRQSQTLGSREEFDAAIAKVEATFEGREVPRPDGWGGFRVVPQAFEFWYGAKFRLHERWRYEADAASHWSKRMLYP.

FMN is bound by residues 44-49 (RTVLLK), 59-60 (YT), lysine 66, and glutamine 91. Lysine 49 provides a ligand contact to substrate. Substrate is bound by residues tyrosine 109, arginine 113, and serine 117. FMN is bound by residues 126–127 (QS) and tryptophan 171. Residue 177–179 (RLH) coordinates substrate. Arginine 181 is an FMN binding site.

The protein belongs to the pyridoxamine 5'-phosphate oxidase family. As to quaternary structure, homodimer. The cofactor is FMN.

The enzyme catalyses pyridoxamine 5'-phosphate + O2 + H2O = pyridoxal 5'-phosphate + H2O2 + NH4(+). It catalyses the reaction pyridoxine 5'-phosphate + O2 = pyridoxal 5'-phosphate + H2O2. It functions in the pathway cofactor metabolism; pyridoxal 5'-phosphate salvage; pyridoxal 5'-phosphate from pyridoxamine 5'-phosphate: step 1/1. The protein operates within cofactor metabolism; pyridoxal 5'-phosphate salvage; pyridoxal 5'-phosphate from pyridoxine 5'-phosphate: step 1/1. Functionally, catalyzes the oxidation of either pyridoxine 5'-phosphate (PNP) or pyridoxamine 5'-phosphate (PMP) into pyridoxal 5'-phosphate (PLP). In Xanthomonas euvesicatoria pv. vesicatoria (strain 85-10) (Xanthomonas campestris pv. vesicatoria), this protein is Pyridoxine/pyridoxamine 5'-phosphate oxidase.